The chain runs to 198 residues: Probable chorismate pyruvate-lyase (198 aa).

Residues Arg73, Leu111, and Glu172 each contribute to the substrate site.

The protein belongs to the UbiC family.

It is found in the cytoplasm. It carries out the reaction chorismate = 4-hydroxybenzoate + pyruvate. Its pathway is cofactor biosynthesis; ubiquinone biosynthesis. Removes the pyruvyl group from chorismate, with concomitant aromatization of the ring, to provide 4-hydroxybenzoate (4HB) for the ubiquinone pathway. The sequence is that of Probable chorismate pyruvate-lyase from Burkholderia orbicola (strain AU 1054).